A 374-amino-acid polypeptide reads, in one-letter code: Lipoyl synthase, mitochondrial (374 aa).

Positions 101, 106, 112, 132, 136, 139, and 347 each coordinate [4Fe-4S] cluster. Residues 117-336 (ENGTQTATIM…EERGNDLGFL (220 aa)) enclose the Radical SAM core domain.

The protein belongs to the radical SAM superfamily. Lipoyl synthase family. Requires [4Fe-4S] cluster as cofactor.

The protein localises to the mitochondrion. The enzyme catalyses [[Fe-S] cluster scaffold protein carrying a second [4Fe-4S](2+) cluster] + N(6)-octanoyl-L-lysyl-[protein] + 2 oxidized [2Fe-2S]-[ferredoxin] + 2 S-adenosyl-L-methionine + 4 H(+) = [[Fe-S] cluster scaffold protein] + N(6)-[(R)-dihydrolipoyl]-L-lysyl-[protein] + 4 Fe(3+) + 2 hydrogen sulfide + 2 5'-deoxyadenosine + 2 L-methionine + 2 reduced [2Fe-2S]-[ferredoxin]. Its pathway is protein modification; protein lipoylation via endogenous pathway; protein N(6)-(lipoyl)lysine from octanoyl-[acyl-carrier-protein]: step 2/2. Catalyzes the radical-mediated insertion of two sulfur atoms into the C-6 and C-8 positions of the octanoyl moiety bound to the lipoyl domains of lipoate-dependent enzymes, thereby converting the octanoylated domains into lipoylated derivatives. The chain is Lipoyl synthase, mitochondrial from Drosophila pseudoobscura pseudoobscura (Fruit fly).